The primary structure comprises 66 residues: Photosystem II reaction center protein J (66 aa).

The tract at residues 1-27 is disordered; sequence MSGKKSGLPDGRVPDRNPDGTPAVPWK. A helical membrane pass occupies residues 37-57; the sequence is LWLVATAGGMAVMFVVGLFFY.

It belongs to the PsbJ family. As to quaternary structure, PSII is composed of 1 copy each of membrane proteins PsbA, PsbB, PsbC, PsbD, PsbE, PsbF, PsbH, PsbI, PsbJ, PsbK, PsbL, PsbM, PsbT, PsbX, PsbY, PsbZ, Psb30/Ycf12, peripheral proteins PsbO, CyanoQ (PsbQ), PsbU, PsbV and a large number of cofactors. It forms dimeric complexes.

It localises to the cellular thylakoid membrane. Functionally, one of the components of the core complex of photosystem II (PSII). PSII is a light-driven water:plastoquinone oxidoreductase that uses light energy to abstract electrons from H(2)O, generating O(2) and a proton gradient subsequently used for ATP formation. It consists of a core antenna complex that captures photons, and an electron transfer chain that converts photonic excitation into a charge separation. This is Photosystem II reaction center protein J from Synechococcus sp. (strain RCC307).